We begin with the raw amino-acid sequence, 311 residues long: Phosphoribosylamine--glycine ligase (311 aa).

Residues 1–191 form the ATP-grasp domain; sequence DPRVRKQYIQ…LVQVLLAACR (191 aa).

Belongs to the GARS family.

Its subcellular location is the plastid. It is found in the chloroplast. It catalyses the reaction 5-phospho-beta-D-ribosylamine + glycine + ATP = N(1)-(5-phospho-beta-D-ribosyl)glycinamide + ADP + phosphate + H(+). It participates in purine metabolism; IMP biosynthesis via de novo pathway; N(1)-(5-phospho-D-ribosyl)glycinamide from 5-phospho-alpha-D-ribose 1-diphosphate: step 2/2. In Vigna unguiculata (Cowpea), this protein is Phosphoribosylamine--glycine ligase (PUR2).